Reading from the N-terminus, the 267-residue chain is Cytochrome b (267 aa).

The next 4 membrane-spanning stretches (helical) occupy residues 33 to 53 (FGSLLGICLMIQILTGLFLAM), 77 to 98 (WLIRYLHANGASMFFICLFIHV), 113 to 133 (WNIGIILFLTTMATAFVGYVL), and 178 to 198 (FFAFHFILPFIITAFVLVHLL). Positions 83 and 97 each coordinate heme b. Residues His-182 and His-196 each contribute to the heme b site. His-201 lines the a ubiquinone pocket. A helical membrane pass occupies residues 226–246 (IKDLLGVILLLMVLMILVLFF).

It belongs to the cytochrome b family. As to quaternary structure, the cytochrome bc1 complex contains 11 subunits: 3 respiratory subunits (MT-CYB, CYC1 and UQCRFS1), 2 core proteins (UQCRC1 and UQCRC2) and 6 low-molecular weight proteins (UQCRH/QCR6, UQCRB/QCR7, UQCRQ/QCR8, UQCR10/QCR9, UQCR11/QCR10 and a cleavage product of UQCRFS1). This cytochrome bc1 complex then forms a dimer. Heme b serves as cofactor.

The protein resides in the mitochondrion inner membrane. Functionally, component of the ubiquinol-cytochrome c reductase complex (complex III or cytochrome b-c1 complex) that is part of the mitochondrial respiratory chain. The b-c1 complex mediates electron transfer from ubiquinol to cytochrome c. Contributes to the generation of a proton gradient across the mitochondrial membrane that is then used for ATP synthesis. This chain is Cytochrome b (MT-CYB), found in Abrothrix olivaceus (Olive grass mouse).